Consider the following 445-residue polypeptide: Phosphoglucosamine mutase (445 aa).

Catalysis depends on serine 102, which acts as the Phosphoserine intermediate. Mg(2+)-binding residues include serine 102, aspartate 241, aspartate 243, and aspartate 245. Position 102 is a phosphoserine (serine 102).

The protein belongs to the phosphohexose mutase family. The cofactor is Mg(2+). Post-translationally, activated by phosphorylation.

It catalyses the reaction alpha-D-glucosamine 1-phosphate = D-glucosamine 6-phosphate. Its function is as follows. Catalyzes the conversion of glucosamine-6-phosphate to glucosamine-1-phosphate. This chain is Phosphoglucosamine mutase, found in Proteus mirabilis (strain HI4320).